Here is a 313-residue protein sequence, read N- to C-terminus: Olfactory receptor 1f45 (313 aa).

The Extracellular segment spans residues 1–25 (MSSTNQSSVTEFLLLGLSRQPQQQQ). A glycan (N-linked (GlcNAc...) asparagine) is linked at Asn-5. The helical transmembrane segment at 26–50 (LLFLLFLIMYLATVLGNLLIILAIG) threads the bilayer. At 51–57 (TDSRLHT) the chain is on the cytoplasmic side. A helical transmembrane segment spans residues 58–79 (PMYFFLSNLSFVDVCFSSTTVP). Residues 80-100 (KVLANHILGSQAISFSGCLTQ) lie on the Extracellular side of the membrane. An intrachain disulfide couples Cys-97 to Cys-189. A helical membrane pass occupies residues 101 to 120 (LYFLAVFGNMDNFLLAVMSY). Residues 121–139 (DRFVAICHPLHYTTKMTRQ) lie on the Cytoplasmic side of the membrane. The helical transmembrane segment at 140-158 (LCVLLVVGSWVVANMNCLL) threads the bilayer. The Extracellular segment spans residues 159-196 (HILLMARLSFCADNMIPHFFCDGTPLLKLSCSDTHLNE). The chain crosses the membrane as a helical span at residues 197–219 (LMILTEGAVVMVTPFVCILISYI). At 220–236 (HITCAVLRVSSPRGGWK) the chain is on the cytoplasmic side. The chain crosses the membrane as a helical span at residues 237–260 (SFSTCGSHLAVVCLFYGTVIAVYF). Topologically, residues 261–272 (NPSSSHLAGRDM) are extracellular. Residues 273–292 (AAAVMYAVVTPMLNPFIYSL) form a helical membrane-spanning segment. Over 293-313 (RNSDMKAALRKVLAMRFPSKQ) the chain is Cytoplasmic.

The protein belongs to the G-protein coupled receptor 1 family. In terms of tissue distribution, olfactory epithelium.

The protein localises to the cell membrane. Functionally, odorant receptor. This chain is Olfactory receptor 1f45 (Or1f45), found in Rattus norvegicus (Rat).